The sequence spans 499 residues: Hepatic triacylglycerol lipase (499 aa).

The signal sequence occupies residues 1 to 21 (MGSPLCVPIFLAVCILIQSST). N-linked (GlcNAc...) asparagine glycosylation is present at asparagine 78. The active-site Nucleophile is serine 168. The Charge relay system role is filled by aspartate 194. The essential for determining substrate specificity stretch occupies residues 254-277 (CHFLELYKHIAQHGLNALSQTIKC). Histidine 279 (charge relay system) is an active-site residue. Positions 352–486 (YHYQFKIQFI…HPTQEKNFVR (135 aa)) constitute a PLAT domain. An N-linked (GlcNAc...) asparagine glycan is attached at asparagine 397.

The protein belongs to the AB hydrolase superfamily. Lipase family. Homodimer.

Its subcellular location is the secreted. The catalysed reaction is a triacylglycerol + H2O = a diacylglycerol + a fatty acid + H(+). The enzyme catalyses a 1-acyl-sn-glycero-3-phosphocholine + H2O = sn-glycerol 3-phosphocholine + a fatty acid + H(+). It catalyses the reaction a 1,2-diacyl-sn-glycero-3-phosphocholine + H2O = a 2-acyl-sn-glycero-3-phosphocholine + a fatty acid + H(+). It carries out the reaction 1,2,3-tri-(9Z-octadecenoyl)-glycerol + H2O = di-(9Z)-octadecenoylglycerol + (9Z)-octadecenoate + H(+). The catalysed reaction is 1,2-di-(9Z-octadecenoyl)-sn-glycero-3-phosphocholine + H2O = (9Z-octadecenoyl)-sn-glycero-3-phosphocholine + (9Z)-octadecenoate + H(+). The enzyme catalyses 1,2,3-tributanoylglycerol + H2O = dibutanoylglycerol + butanoate + H(+). It catalyses the reaction 1,2-dihexadecanoyl-sn-glycero-3-phosphocholine + H2O = hexadecanoyl-sn-glycero-3-phosphocholine + hexadecanoate + H(+). It carries out the reaction 1,2-di-(9Z-octadecenoyl)-sn-glycerol + H2O = 2-(9Z-octadecenoyl)-glycerol + (9Z)-octadecenoate + H(+). The catalysed reaction is 1,2,3-tri-(9Z-octadecenoyl)-glycerol + H2O = 2,3-di-(9Z)-octadecenoyl-sn-glycerol + (9Z)-octadecenoate + H(+). The enzyme catalyses 1-(9Z-octadecenoyl)-sn-glycero-3-phospho-L-serine + H2O = sn-glycero-3-phospho-L-serine + (9Z)-octadecenoate + H(+). It catalyses the reaction 1-hexadecanoyl-sn-glycero-3-phosphocholine + H2O = sn-glycerol 3-phosphocholine + hexadecanoate + H(+). It carries out the reaction 1,3-di-(9Z-octadecenoyl)-glycerol + H2O = 3-(9Z-octadecenoyl)-sn-glycerol + (9Z)-octadecenoate + H(+). Catalyzes the hydrolysis of triglycerides and phospholipids present in circulating plasma lipoproteins, including chylomicrons, intermediate density lipoproteins (IDL), low density lipoproteins (LDL) of large size and high density lipoproteins (HDL), releasing free fatty acids (FFA) and smaller lipoprotein particles. Also exhibits lysophospholipase activity. Can hydrolyze both neutral lipid and phospholipid substrates but shows a greater binding affinity for neutral lipid substrates than phospholipid substrates. In native LDL, preferentially hydrolyzes the phosphatidylcholine species containing polyunsaturated fatty acids at sn-2 position. The sequence is that of Hepatic triacylglycerol lipase (LIPC) from Oryctolagus cuniculus (Rabbit).